A 362-amino-acid polypeptide reads, in one-letter code: Class I histocompatibility antigen, Gogo-B*0102 alpha chain (362 aa).

The signal sequence occupies residues 1-24 (MRVTAPRTLLLLLSAALALTETWA). Residues 25–114 (GSHSMRYFDT…ALRYYNQSEA (90 aa)) are alpha-1. The Extracellular segment spans residues 25–308 (GSHSMRYFDT…EPSSQSTIPI (284 aa)). N-linked (GlcNAc...) asparagine glycosylation occurs at Asn-110. Positions 115–206 (GSHTFQRMFG…ENGRETLQRA (92 aa)) are alpha-2. Disulfide bonds link Cys-125/Cys-188 and Cys-227/Cys-283. An alpha-3 region spans residues 207–298 (DTPKTHVTHH…GLPKPLTLRW (92 aa)). The 87-residue stretch at 209-295 (PKTHVTHHPI…QHEGLPKPLT (87 aa)) folds into the Ig-like C1-type domain. Residues 299-308 (EPSSQSTIPI) are connecting peptide. The chain crosses the membrane as a helical span at residues 309–332 (VGIVAGLAVLAVVVIGAVVTAVIC). Residues 333-362 (RRKSSGGKGGSYSQAASSDSAQGSDVSLTA) lie on the Cytoplasmic side of the membrane. A disordered region spans residues 335–362 (KSSGGKGGSYSQAASSDSAQGSDVSLTA). The span at 343–362 (SYSQAASSDSAQGSDVSLTA) shows a compositional bias: low complexity.

Belongs to the MHC class I family. In terms of assembly, heterodimer of an alpha chain and a beta chain (beta-2-microglobulin).

The protein resides in the membrane. Involved in the presentation of foreign antigens to the immune system. This is Class I histocompatibility antigen, Gogo-B*0102 alpha chain from Gorilla gorilla gorilla (Western lowland gorilla).